The sequence spans 429 residues: Histidine--tRNA ligase (429 aa).

Belongs to the class-II aminoacyl-tRNA synthetase family. In terms of assembly, homodimer.

It is found in the cytoplasm. The catalysed reaction is tRNA(His) + L-histidine + ATP = L-histidyl-tRNA(His) + AMP + diphosphate + H(+). The sequence is that of Histidine--tRNA ligase from Pseudomonas putida (strain W619).